The chain runs to 306 residues: MNPLKKKPRSKNLNPTVPLPDWMKVRVSFPTDSDALSVVRAEVESKELHTVCESASCPNLNHCWNRKTATYMLAGDICTRRCQYCDVAFGKPKPLDSLEPERVARSVQSLGLRHVVLTAVNRDDLKDGGASHFAETITKIKTYHKDCTIEVLIPDFKAKEDSLQILYAAKPNIINHNIETVESLFPTITPQKNYKRSLEVLAHIANHGFLTKSGIILGLGETDEDVNQCLMDLFAHGVRMLTIGQYLQPGPTHYPVQSFVRPETFVMWKETAYKIGFKTVASGPLVRSSYHADEYFHEESQILPTE.

Cys-52, Cys-57, Cys-63, Cys-78, Cys-82, Cys-85, and Ser-289 together coordinate [4Fe-4S] cluster. The Radical SAM core domain occupies 64 to 278 (WNRKTATYML…KETAYKIGFK (215 aa)).

It belongs to the radical SAM superfamily. Lipoyl synthase family. [4Fe-4S] cluster is required as a cofactor.

It is found in the cytoplasm. The catalysed reaction is [[Fe-S] cluster scaffold protein carrying a second [4Fe-4S](2+) cluster] + N(6)-octanoyl-L-lysyl-[protein] + 2 oxidized [2Fe-2S]-[ferredoxin] + 2 S-adenosyl-L-methionine + 4 H(+) = [[Fe-S] cluster scaffold protein] + N(6)-[(R)-dihydrolipoyl]-L-lysyl-[protein] + 4 Fe(3+) + 2 hydrogen sulfide + 2 5'-deoxyadenosine + 2 L-methionine + 2 reduced [2Fe-2S]-[ferredoxin]. Its pathway is protein modification; protein lipoylation via endogenous pathway; protein N(6)-(lipoyl)lysine from octanoyl-[acyl-carrier-protein]: step 2/2. Catalyzes the radical-mediated insertion of two sulfur atoms into the C-6 and C-8 positions of the octanoyl moiety bound to the lipoyl domains of lipoate-dependent enzymes, thereby converting the octanoylated domains into lipoylated derivatives. The sequence is that of Lipoyl synthase from Leptospira biflexa serovar Patoc (strain Patoc 1 / Ames).